The following is a 357-amino-acid chain: UPF0283 membrane protein HSM_0945 (357 aa).

3 helical membrane-spanning segments follow: residues 67–87 (LMAT…QWLV), 96–116 (IAFV…GTII), and 213–233 (AVES…MFFI).

Belongs to the UPF0283 family.

The protein resides in the cell inner membrane. The protein is UPF0283 membrane protein HSM_0945 of Histophilus somni (strain 2336) (Haemophilus somnus).